The sequence spans 161 residues: RNA pyrophosphohydrolase (161 aa).

A Nudix hydrolase domain is found at 12-154 (PYRPGVGMMI…KRKLYQAVVK (143 aa)). A Nudix box motif is present at residues 46-67 (GGIVPGETPSIAAMREMLEEIG).

Belongs to the Nudix hydrolase family. RppH subfamily. A divalent metal cation serves as cofactor.

Functionally, accelerates the degradation of transcripts by removing pyrophosphate from the 5'-end of triphosphorylated RNA, leading to a more labile monophosphorylated state that can stimulate subsequent ribonuclease cleavage. The protein is RNA pyrophosphohydrolase of Rickettsia canadensis (strain McKiel).